The chain runs to 158 residues: 6,7-dimethyl-8-ribityllumazine synthase (158 aa).

5-amino-6-(D-ribitylamino)uracil is bound by residues Phe-22, 57–59, and 81–83; these read AVE and AVI. 86–87 is a (2S)-2-hydroxy-3-oxobutyl phosphate binding site; that stretch reads GT. His-89 (proton donor) is an active-site residue. Residue Phe-114 participates in 5-amino-6-(D-ribitylamino)uracil binding. Residue Arg-128 coordinates (2S)-2-hydroxy-3-oxobutyl phosphate.

Belongs to the DMRL synthase family. In terms of assembly, forms an icosahedral capsid composed of 60 subunits, arranged as a dodecamer of pentamers.

It catalyses the reaction (2S)-2-hydroxy-3-oxobutyl phosphate + 5-amino-6-(D-ribitylamino)uracil = 6,7-dimethyl-8-(1-D-ribityl)lumazine + phosphate + 2 H2O + H(+). It participates in cofactor biosynthesis; riboflavin biosynthesis; riboflavin from 2-hydroxy-3-oxobutyl phosphate and 5-amino-6-(D-ribitylamino)uracil: step 1/2. Functionally, catalyzes the formation of 6,7-dimethyl-8-ribityllumazine by condensation of 5-amino-6-(D-ribitylamino)uracil with 3,4-dihydroxy-2-butanone 4-phosphate. This is the penultimate step in the biosynthesis of riboflavin. This chain is 6,7-dimethyl-8-ribityllumazine synthase, found in Shewanella putrefaciens (strain CN-32 / ATCC BAA-453).